Consider the following 321-residue polypeptide: Glucokinase (321 aa).

8–13 (GDVGGT) is a binding site for ATP.

The protein belongs to the bacterial glucokinase family.

It localises to the cytoplasm. The catalysed reaction is D-glucose + ATP = D-glucose 6-phosphate + ADP + H(+). The polypeptide is Glucokinase (Erwinia tasmaniensis (strain DSM 17950 / CFBP 7177 / CIP 109463 / NCPPB 4357 / Et1/99)).